Reading from the N-terminus, the 334-residue chain is Large ribosomal subunit protein uL3 (334 aa).

Over residues 1-10 (MGMKKNRPRR) the composition is skewed to basic residues. Positions 1–21 (MGMKKNRPRRGSLAFSPRKRA) are disordered.

It belongs to the universal ribosomal protein uL3 family. As to quaternary structure, part of the 50S ribosomal subunit. Forms a cluster with proteins L14 and L24e.

Its function is as follows. One of the primary rRNA binding proteins, it binds directly near the 3'-end of the 23S rRNA, where it nucleates assembly of the 50S subunit. The polypeptide is Large ribosomal subunit protein uL3 (Methanococcus maripaludis (strain C5 / ATCC BAA-1333)).